A 101-amino-acid polypeptide reads, in one-letter code: Large ribosomal subunit protein uL23 (101 aa).

This sequence belongs to the universal ribosomal protein uL23 family. As to quaternary structure, part of the 50S ribosomal subunit. Contacts protein L29, and trigger factor when it is bound to the ribosome.

Functionally, one of the early assembly proteins it binds 23S rRNA. One of the proteins that surrounds the polypeptide exit tunnel on the outside of the ribosome. Forms the main docking site for trigger factor binding to the ribosome. The chain is Large ribosomal subunit protein uL23 from Corynebacterium glutamicum (strain R).